Here is a 290-residue protein sequence, read N- to C-terminus: 33 kDa chaperonin (290 aa).

Cystine bridges form between Cys234-Cys236 and Cys267-Cys270.

It belongs to the HSP33 family. Under oxidizing conditions two disulfide bonds are formed involving the reactive cysteines. Under reducing conditions zinc is bound to the reactive cysteines and the protein is inactive.

The protein localises to the cytoplasm. Redox regulated molecular chaperone. Protects both thermally unfolding and oxidatively damaged proteins from irreversible aggregation. Plays an important role in the bacterial defense system toward oxidative stress. The protein is 33 kDa chaperonin of Colwellia psychrerythraea (strain 34H / ATCC BAA-681) (Vibrio psychroerythus).